We begin with the raw amino-acid sequence, 64 residues long: Prokaryotic ubiquitin-like protein Pup (64 aa).

Residues 1-37 (MAQEQTKRGGGGGEDDDLTGSTAAGQERREKLTDETD) form a disordered region. The interval 21 to 58 (STAAGQERREKLTDETDDLLDEIDDVLEENAEDFVRAY) is ARC ATPase binding. Residues 23-52 (AAGQERREKLTDETDDLLDEIDDVLEENAE) are a coiled coil. At glutamine 64 the chain carries Deamidated glutamine. Glutamine 64 is covalently cross-linked (Isoglutamyl lysine isopeptide (Gln-Lys) (interchain with K-? in acceptor proteins)).

Belongs to the prokaryotic ubiquitin-like protein family. Strongly interacts with the proteasome-associated ATPase ARC through a hydrophobic interface; the interacting region of Pup lies in its C-terminal half. There is one Pup binding site per ARC hexamer ring. Post-translationally, is modified by deamidation of its C-terminal glutamine to glutamate by the deamidase Dop, a prerequisite to the subsequent pupylation process.

It functions in the pathway protein degradation; proteasomal Pup-dependent pathway. Its function is as follows. Protein modifier that is covalently attached to lysine residues of substrate proteins, thereby targeting them for proteasomal degradation. The tagging system is termed pupylation. This is Prokaryotic ubiquitin-like protein Pup from Mycolicibacterium vanbaalenii (strain DSM 7251 / JCM 13017 / BCRC 16820 / KCTC 9966 / NRRL B-24157 / PYR-1) (Mycobacterium vanbaalenii).